The primary structure comprises 388 residues: uncharacterized protein (388 aa).

Cys-18, Cys-24, Cys-27, and Cys-99 together coordinate [4Fe-4S] cluster. S-adenosyl-L-methionine contacts are provided by Gln-212, Glu-262, and Asn-313. Cys-343 acts as the Nucleophile in catalysis.

Belongs to the class I-like SAM-binding methyltransferase superfamily. RNA M5U methyltransferase family.

This is an uncharacterized protein from Bdellovibrio bacteriovorus (strain ATCC 15356 / DSM 50701 / NCIMB 9529 / HD100).